A 121-amino-acid chain; its full sequence is Small ribosomal subunit protein uS13 (121 aa).

Residues Gly-95–Ser-121 form a disordered region.

It belongs to the universal ribosomal protein uS13 family. Part of the 30S ribosomal subunit. Forms a loose heterodimer with protein S19. Forms two bridges to the 50S subunit in the 70S ribosome.

Located at the top of the head of the 30S subunit, it contacts several helices of the 16S rRNA. In the 70S ribosome it contacts the 23S rRNA (bridge B1a) and protein L5 of the 50S subunit (bridge B1b), connecting the 2 subunits; these bridges are implicated in subunit movement. Contacts the tRNAs in the A and P-sites. The polypeptide is Small ribosomal subunit protein uS13 (Campylobacter jejuni subsp. jejuni serotype O:6 (strain 81116 / NCTC 11828)).